A 106-amino-acid polypeptide reads, in one-letter code: UPF0145 protein BF0270 (106 aa).

This sequence belongs to the UPF0145 family.

This is UPF0145 protein BF0270 from Bacteroides fragilis (strain YCH46).